The sequence spans 654 residues: Tetracycline resistance protein TetQ (654 aa).

Positions 1–244 (MNIINLGILA…AISSFILPPE (244 aa)) constitute a tr-type G domain. GTP-binding positions include 10–17 (AHIDAGKT), 74–78 (DTPGH), and 128–131 (NKID).

The protein belongs to the TRAFAC class translation factor GTPase superfamily. Classic translation factor GTPase family. TetM/TetO subfamily.

In terms of biological role, abolishes the inhibitory effect of tetracyclin on protein synthesis by a non-covalent modification of the ribosomes. This is Tetracycline resistance protein TetQ (tetQ) from Prevotella intermedia.